Here is a 610-residue protein sequence, read N- to C-terminus: Elongation factor 4 (610 aa).

Residues 11–193 (EKIRNFSIIA…QIVEKVPAPT (183 aa)) form the tr-type G domain. Residues 23-28 (DHGKST) and 140-143 (NKID) contribute to the GTP site.

The protein belongs to the TRAFAC class translation factor GTPase superfamily. Classic translation factor GTPase family. LepA subfamily.

It is found in the cell membrane. The enzyme catalyses GTP + H2O = GDP + phosphate + H(+). Functionally, required for accurate and efficient protein synthesis under certain stress conditions. May act as a fidelity factor of the translation reaction, by catalyzing a one-codon backward translocation of tRNAs on improperly translocated ribosomes. Back-translocation proceeds from a post-translocation (POST) complex to a pre-translocation (PRE) complex, thus giving elongation factor G a second chance to translocate the tRNAs correctly. Binds to ribosomes in a GTP-dependent manner. This Streptococcus pyogenes serotype M49 (strain NZ131) protein is Elongation factor 4.